A 760-amino-acid polypeptide reads, in one-letter code: U-box domain-containing protein 3 (760 aa).

The stretch at 146-217 forms a coiled coil; that stretch reads LMELMENALR…EQTEQLIELV (72 aa). The region spanning 237 to 311 is the U-box domain; that stretch reads SIPPYFRCPL…ASWLEANRIN (75 aa). The span at 424-434 shows a compositional bias: polar residues; sequence ILGNHQSSSEM. The segment at 424–448 is disordered; sequence ILGNHQSSSEMSPKKNLESSNNVNH. ARM repeat units lie at residues 504-543, 545-584, 586-626, 628-666, and 668-707; these read IENR…NLSI, ELNK…SLSV, QVNR…NLSI, HDNK…NLSA, and GEGR…QLCL.

It catalyses the reaction S-ubiquitinyl-[E2 ubiquitin-conjugating enzyme]-L-cysteine + [acceptor protein]-L-lysine = [E2 ubiquitin-conjugating enzyme]-L-cysteine + N(6)-ubiquitinyl-[acceptor protein]-L-lysine.. The protein operates within protein modification; protein ubiquitination. Functionally, functions as an E3 ubiquitin ligase. This is U-box domain-containing protein 3 (PUB3) from Arabidopsis thaliana (Mouse-ear cress).